The primary structure comprises 91 residues: Small ribosomal subunit protein bS16 (91 aa).

It belongs to the bacterial ribosomal protein bS16 family.

This chain is Small ribosomal subunit protein bS16, found in Limosilactobacillus reuteri (strain DSM 20016) (Lactobacillus reuteri).